A 4144-amino-acid chain; its full sequence is DNA-dependent protein kinase catalytic subunit (4144 aa).

Position 127 is an N6-acetyllysine (K127). One copy of the HEAT 1 repeat lies at 298-333; that stretch reads DNYVSLFEVLSKWCSHTNVEMKKAAHSALESFLKQV. S521, S851, and S903 each carry phosphoserine. Residues 1014–1050 form an HEAT 2 repeat; that stretch reads QDTVALLETILDGIVDPVDSTLRDFCGRCIREFLKWS. Position 1075 is a phosphoserine (S1075). N6-acetyllysine is present on K1219. The segment at 1516-1551 is interaction with C1D; the sequence is LDPSCKRLASGLLELAFAFGGLCEHLVDLLLDTAVL. A leucine-zipper region spans residues 1516-1551; sequence LDPSCKRLASGLLELAFAFGGLCEHLVDLLLDTAVL. Residues 1736 to 1769 form a TPR 1 repeat; sequence PMKSEEFPVGTLRYSNYVDCMKKFLDALELSQSP. K1983 bears the N6-acetyllysine mark. A Phosphoserine; by autocatalysis modification is found at S2069. K2271 carries the N6-acetyllysine modification. Residues 2448–3228 form a KIP-binding region; sequence LDIIYKMMAK…DHSLSMDEER (781 aa). At T2547 the chain carries Phosphothreonine. The residue at position 2621 (T2621) is a Phosphothreonine; by autocatalysis. S2624 carries the post-translational modification Phosphoserine; by autocatalysis. T2650 and T2659 each carry phosphothreonine; by autocatalysis. The disordered stretch occupies residues 2697-2729; that stretch reads AQKRNEKSQRAPLKSVGPDFGEKKLGLPGDKVD. Residues 2716–2729 show a composition bias toward basic and acidic residues; the sequence is FGEKKLGLPGDKVD. The interval 2753–2781 is may split the end of the DNA molecule, with the two strands separating around the region; it reads EKLSLIYARKGIAEQKREKEIKSELKMKH. S2805 is subject to Phosphoserine. 3 TPR repeats span residues 2903–2935, 2936–2964, and 2965–2998; these read PVGV…VSPD, VVRW…SEIG, and TKQI…EEWV. The FAT domain occupies 2922–3555; it reads PAKQFKGRMR…VYPFIISSES (634 aa). At S3221 the chain carries Phosphoserine. N6-acetyllysine is present on residues K3257, K3276, K3654, and K3658. The stretch at 3711–3748 is one TPR 5 repeat; the sequence is LRNELEIPGQYDGKGKPLPEYHARIAGFDERIKVMASI. Residues 3738-4069 form the PI3K/PI4K catalytic domain; it reads FDERIKVMAS…IHYAKRKLAG (332 aa). Positions 3744–3750 are G-loop; sequence VMASIRK. Residues S3747 and S3837 each carry the phosphoserine modification. The catalytic loop stretch occupies residues 3935–3943; that stretch reads GIGDRHLNN. Residues 3955-3980 form an activation loop region; it reads GIDFGHAFGSATQFLPVPELMPFRLT. Position 4042 is a phosphoserine (S4042). The FATC domain maps to 4112–4144; sequence NGLSEEAQVKCLIDQATDPNILGRTWIGWEPWM.

The protein belongs to the PI3/PI4-kinase family. As to quaternary structure, DNA-PK is a heterotrimer of PRKDC and the Ku dimer (composed of XRCC6/Ku70 and XRCC5/Ku86). Formation of this complex may be promoted by interaction with ILF3. Component of the core long-range non-homologous end joining (NHEJ) complex (also named DNA-PK complex) composed of PRKDC, LIG4, XRCC4, XRCC6/Ku70, XRCC5/Ku86 and NHEJ1/XLF. Additional component of the NHEJ complex includes PAXX. Following autophosphorylation, PRKDC dissociates from DNA. Interacts with DNA-PKcs-interacting protein (KIP) with the region upstream the kinase domain. PRKDC alone also interacts with and phosphorylates DCLRE1C, thereby activating the latent endonuclease activity of this protein. Interacts with C1D. Interacts with TTI1 and TELO2. Interacts with CIB1. Interacts with SETX. Interacts with NR4A3; the DNA-dependent protein kinase complex DNA-PK phosphorylates and activates NR4A3 and prevents NR4A3 ubiquitination and degradation. Interacts with BRAT1. Part of the HDP-RNP complex composed of at least HEXIM1, PRKDC, XRCC5, XRCC6, paraspeckle proteins (SFPQ, NONO, PSPC1, RBM14, and MATR3) and NEAT1 RNA. Interacts with KAT5. Autophosphorylated at two clusters, the T2609 cluster and the S2056 cluster. Autophosphorylated on Ser-2069, Thr-2621, Thr-2650 and Thr-2659. Ser-2069 and Thr-2621 are DNA damage-inducible phosphorylation sites (inducible with ionizing radiation, IR) dephosphorylated by PPP5C. Autophosphorylation induces a conformational change that leads to remodeling of the DNA-PK complex, requisite for efficient end processing and DNA repair. Autophosphorylation in trans within DNA-PK complexes loaded on DNA ends leads to the dissociation of PRKDC from DNA and the transition into the short-range NHEJ complex. Autophosphorylation of the T2609 cluster is required for hematopoietic development and protein synthesis in erythrocytes precursors. Post-translationally, S-nitrosylated by GAPDH. In terms of processing, polyubiquitinated by RNF144A, leading to proteasomal degradation.

The protein resides in the nucleus. It is found in the nucleolus. It localises to the cytoplasm. The protein localises to the cytosol. It catalyses the reaction L-seryl-[protein] + ATP = O-phospho-L-seryl-[protein] + ADP + H(+). The catalysed reaction is L-threonyl-[protein] + ATP = O-phospho-L-threonyl-[protein] + ADP + H(+). Activity seems to be attenuated by autophosphorylation. Binding to the SL1 region of U3 small nucleolar RNA promotes auto-phosphorylation activity. Inhibited by wortmannin. In terms of biological role, serine/threonine-protein kinase that acts as a molecular sensor for DNA damage. Involved in DNA non-homologous end joining (NHEJ) required for double-strand break (DSB) repair and V(D)J recombination. Must be bound to DNA to express its catalytic properties. Promotes processing of hairpin DNA structures in V(D)J recombination by activation of the hairpin endonuclease artemis (DCLRE1C). Recruited by XRCC5 and XRCC6 to DNA ends and is required to (1) protect and align broken ends of DNA, thereby preventing their degradation, (2) and sequester the DSB for repair by NHEJ. Acts as a scaffold protein to aid the localization of DNA repair proteins to the site of damage. The assembly of the DNA-PK complex at DNA ends is also required for the NHEJ ligation step. Found at the ends of chromosomes, suggesting a further role in the maintenance of telomeric stability and the prevention of chromosomal end fusion. Also involved in modulation of transcription. As part of the DNA-PK complex, involved in the early steps of ribosome assembly by promoting the processing of precursor rRNA into mature 18S rRNA in the small-subunit processome. Binding to U3 small nucleolar RNA, recruits PRKDC and XRCC5/Ku86 to the small-subunit processome. Recognizes the substrate consensus sequence [ST]-Q. Phosphorylates 'Ser-139' of histone variant H2AX, thereby regulating DNA damage response mechanism. Phosphorylates ASF1A, DCLRE1C, c-Abl/ABL1, histone H1, HSPCA, c-jun/JUN, p53/TP53, PARP1, POU2F1, DHX9, FH, SRF, NHEJ1/XLF, XRCC1, XRCC4, XRCC5, XRCC6, WRN, MYC and RFA2. Can phosphorylate C1D not only in the presence of linear DNA but also in the presence of supercoiled DNA. Ability to phosphorylate p53/TP53 in the presence of supercoiled DNA is dependent on C1D. Acts as a regulator of the phosphatidylinositol 3-kinase/protein kinase B signal transduction by mediating phosphorylation of 'Ser-473' of protein kinase B (PKB/AKT1, PKB/AKT2, PKB/AKT3), promoting their activation. Contributes to the determination of the circadian period length by antagonizing phosphorylation of CRY1 'Ser-588' and increasing CRY1 protein stability, most likely through an indirect mechanism. Plays a role in the regulation of DNA virus-mediated innate immune response by assembling into the HDP-RNP complex, a complex that serves as a platform for IRF3 phosphorylation and subsequent innate immune response activation through the cGAS-STING pathway. Also regulates the cGAS-STING pathway by catalyzing phosphorylation of CGAS, thereby impairing CGAS oligomerization and activation. Also regulates the cGAS-STING pathway by mediating phosphorylation of PARP1. The polypeptide is DNA-dependent protein kinase catalytic subunit (PRKDC) (Canis lupus familiaris (Dog)).